Reading from the N-terminus, the 414-residue chain is Esterase FrsA (414 aa).

It belongs to the FrsA family.

The catalysed reaction is a carboxylic ester + H2O = an alcohol + a carboxylate + H(+). Functionally, catalyzes the hydrolysis of esters. The protein is Esterase FrsA of Salmonella typhi.